The chain runs to 465 residues: Phospholipase A1-II 5 (465 aa).

The Acyl-ester intermediate role is filled by Ser-233. Residues Ser-233, Asp-297, and His-336 each act as charge relay system in the active site.

This sequence belongs to the AB hydrolase superfamily. Lipase family.

The protein resides in the cytoplasm. Acylhydrolase that catalyzes the hydrolysis of phospholipids at the sn-1 position. The polypeptide is Phospholipase A1-II 5 (Oryza sativa subsp. indica (Rice)).